The sequence spans 590 residues: UvrABC system protein C (590 aa).

In terms of domain architecture, GIY-YIG spans 15-98; it reads AEPGVYQFVA…VKRHQPRYNV (84 aa). The UVR domain maps to 207-242; the sequence is GALADPLRREMAAAAQAEAFERAANLRDRLAVVEGF.

Belongs to the UvrC family. Interacts with UvrB in an incision complex.

It is found in the cytoplasm. Its function is as follows. The UvrABC repair system catalyzes the recognition and processing of DNA lesions. UvrC both incises the 5' and 3' sides of the lesion. The N-terminal half is responsible for the 3' incision and the C-terminal half is responsible for the 5' incision. The sequence is that of UvrABC system protein C from Halobacterium salinarum (strain ATCC 29341 / DSM 671 / R1).